Reading from the N-terminus, the 169-residue chain is Ribosome maturation factor RimM (169 aa).

The 75-residue stretch at 95–169 folds into the PRC barrel domain; sequence EDGYYWTDLI…QITVDWELGY (75 aa).

It belongs to the RimM family. As to quaternary structure, binds ribosomal protein uS19.

Its subcellular location is the cytoplasm. Its function is as follows. An accessory protein needed during the final step in the assembly of 30S ribosomal subunit, possibly for assembly of the head region. Essential for efficient processing of 16S rRNA. May be needed both before and after RbfA during the maturation of 16S rRNA. It has affinity for free ribosomal 30S subunits but not for 70S ribosomes. This is Ribosome maturation factor RimM from Nitrosomonas europaea (strain ATCC 19718 / CIP 103999 / KCTC 2705 / NBRC 14298).